The sequence spans 294 residues: Cytidine deaminase (294 aa).

CMP/dCMP-type deaminase domains follow at residues 48-168 (DEDA…FGPK) and 186-294 (LTGD…VLLA). 89–91 (NME) contacts substrate. Position 102 (His102) interacts with Zn(2+). Glu104 serves as the catalytic Proton donor. Residues Cys129 and Cys132 each contribute to the Zn(2+) site.

It belongs to the cytidine and deoxycytidylate deaminase family. As to quaternary structure, homodimer. Zn(2+) is required as a cofactor.

The enzyme catalyses cytidine + H2O + H(+) = uridine + NH4(+). It carries out the reaction 2'-deoxycytidine + H2O + H(+) = 2'-deoxyuridine + NH4(+). Functionally, this enzyme scavenges exogenous and endogenous cytidine and 2'-deoxycytidine for UMP synthesis. This Escherichia coli O139:H28 (strain E24377A / ETEC) protein is Cytidine deaminase.